Consider the following 390-residue polypeptide: Putative methylesterase 11, chloroplastic (390 aa).

The transit peptide at 1–46 (MGNLCSLFTPPKPVKKRKPITKRQSSIGASSSGSGLNSNRWNNRVR) directs the protein to the chloroplast. Disordered stretches follow at residues 1–52 (MGNL…SSRR) and 94–119 (QGSC…DPLL). Residues 25-48 (SSIGASSSGSGLNSNRWNNRVRSS) are compositionally biased toward low complexity. Positions 94–104 (QGSCSKKNQLP) are enriched in polar residues. Low complexity predominate over residues 105–114 (RSSSSRSRSS). The AB hydrolase-1 domain occupies 137–241 (NHFVLVHGGS…KAVFLAAAML (105 aa)). Aspartate 213 functions as the Acyl-ester intermediate in the catalytic mechanism. Active-site charge relay system residues include aspartate 339 and histidine 367.

Belongs to the AB hydrolase superfamily. Methylesterase family.

The protein localises to the plastid. The protein resides in the chloroplast. In terms of biological role, putative methylesterase. The sequence is that of Putative methylesterase 11, chloroplastic from Arabidopsis thaliana (Mouse-ear cress).